The sequence spans 566 residues: ATP-binding protein SyrD (566 aa).

The region spanning 22–301 is the ABC transmembrane type-1 domain; it reads HPWLTFFTLL…LVSAMPMLAQ (280 aa). 6 consecutive transmembrane segments (helical) span residues 24–44, 61–81, 132–152, 158–178, 250–270, and 279–299; these read WLTFFTLLTGLISGVASIAVV, LFWFVGLSVVALLFRNGASLF, LLIMPTILVESAVFLFGIAYL, VVFAITISLMILGVAMYLLFF, QLTLSLLVGCLLFAAPMFAVI, and VLAVLYIMGPLVMLVSAMPML. In terms of domain architecture, ABC transporter spans 343 to 566; the sequence is IQLKNVHMNY…VKCAVEGKRA (224 aa). 380 to 387 is a binding site for ATP; that stretch reads GGNGCGKS.

Belongs to the ABC transporter superfamily. As to quaternary structure, dimer.

Its subcellular location is the cell inner membrane. Its function is as follows. ATP-driven efflux pump necessary for the secretion of syringomycin. May specifically bind syringomycin and translocate it to the periplasmic space. SyrD is also required for full expression of the syrB gene. This chain is ATP-binding protein SyrD (syrD), found in Pseudomonas syringae pv. syringae.